The sequence spans 183 residues: Protein Syd (183 aa).

The protein belongs to the Syd family.

It localises to the cell inner membrane. In terms of biological role, interacts with the SecY protein in vivo. May bind preferentially to an uncomplexed state of SecY, thus functioning either as a chelating agent for excess SecY in the cell or as a regulatory factor that negatively controls the translocase function. This Yersinia enterocolitica serotype O:8 / biotype 1B (strain NCTC 13174 / 8081) protein is Protein Syd.